We begin with the raw amino-acid sequence, 439 residues long: Histidinol dehydrogenase (439 aa).

NAD(+)-binding residues include tyrosine 129, glutamine 193, and asparagine 222. Residues threonine 245, glutamine 267, and histidine 270 each coordinate substrate. Zn(2+) contacts are provided by glutamine 267 and histidine 270. Active-site proton acceptor residues include glutamate 336 and histidine 337. Positions 337, 370, 424, and 429 each coordinate substrate. Aspartate 370 contributes to the Zn(2+) binding site. Histidine 429 contributes to the Zn(2+) binding site.

The protein belongs to the histidinol dehydrogenase family. The cofactor is Zn(2+).

The enzyme catalyses L-histidinol + 2 NAD(+) + H2O = L-histidine + 2 NADH + 3 H(+). Its pathway is amino-acid biosynthesis; L-histidine biosynthesis; L-histidine from 5-phospho-alpha-D-ribose 1-diphosphate: step 9/9. In terms of biological role, catalyzes the sequential NAD-dependent oxidations of L-histidinol to L-histidinaldehyde and then to L-histidine. The protein is Histidinol dehydrogenase of Cutibacterium acnes (strain DSM 16379 / KPA171202) (Propionibacterium acnes).